Reading from the N-terminus, the 374-residue chain is Arrestin domain-containing protein 15 (374 aa).

The tract at residues 344–374 is disordered; that stretch reads HHLNRSKAKVSKTEQQQRKTRNIVEENPYFR.

Belongs to the arrestin family.

In Caenorhabditis elegans, this protein is Arrestin domain-containing protein 15 (arrd-15).